The sequence spans 300 residues: Tetrahydromethanopterin S-methyltransferase subunit E (300 aa).

Helical transmembrane passes span 62–82 (PVSY…LMGM), 86–106 (PILA…AYSV), 135–155 (PIVG…YLAV), 158–178 (LGNP…VGAI), 226–246 (YFCS…IIFL), and 261–281 (LITK…TTLL).

The protein belongs to the MtrE family. The complex is composed of 8 subunits; MtrA, MtrB, MtrC, MtrD, MtrE, MtrF, MtrG and MtrH.

It is found in the cell membrane. It carries out the reaction 5-methyl-5,6,7,8-tetrahydromethanopterin + coenzyme M + 2 Na(+)(in) = 5,6,7,8-tetrahydromethanopterin + methyl-coenzyme M + 2 Na(+)(out). It participates in one-carbon metabolism; methanogenesis from CO(2); methyl-coenzyme M from 5,10-methylene-5,6,7,8-tetrahydromethanopterin: step 2/2. In terms of biological role, part of a complex that catalyzes the formation of methyl-coenzyme M and tetrahydromethanopterin from coenzyme M and methyl-tetrahydromethanopterin. This is an energy-conserving, sodium-ion translocating step. The chain is Tetrahydromethanopterin S-methyltransferase subunit E from Methanococcus aeolicus (strain ATCC BAA-1280 / DSM 17508 / OCM 812 / Nankai-3).